The primary structure comprises 308 residues: GATA transcription factor 9 (308 aa).

The disordered stretch occupies residues 34–57 (DDGLNTLPDSSTLSTGTLTDSSNS). The span at 39–57 (TLPDSSTLSTGTLTDSSNS) shows a compositional bias: low complexity. The Nuclear localization signal motif lies at 142–149 (KARSKRSR). The GATA-type zinc finger occupies 193–247 (SGGGRRCLHCATEKTPQWRTGPMGPKTLCNACGVRYKSGRLVPEYRPASSPTFVM).

Belongs to the type IV zinc-finger family. Class A subfamily.

It localises to the nucleus. Its function is as follows. Transcriptional activator that specifically binds 5'-GATA-3' or 5'-GAT-3' motifs within gene promoters. May be involved in the regulation of some light-responsive genes. In Arabidopsis thaliana (Mouse-ear cress), this protein is GATA transcription factor 9 (GATA9).